Here is a 368-residue protein sequence, read N- to C-terminus: MVVLGSTGSIGKNALKIAKKFGIEIEALSCGKNIALINEQIQVFKPKKVAILDPSDLNDLEPLGAEVFVGLEGIDAMIEECTSNLVLNAIVGVAGLKASFKSLQRNKKLALANKESLVSAGHLLDISQITPIDSEHFGLWALLQNKTLKPKSLIISASGGAFRDTPLEFIPIQNAQNALKHPNWSMGSKITIDSASMVNKLFEILETYWLFGASLKIDALIERSSIVHALVEFEDNSIIAHLASADMQLPISYAIDPKLASLSASIKPLDLYALSAIKFEPISMERYTLWCYKDLLLENPKLGVVLNASNEVAMEKFLNKEIAFGGLIQTISQALESYDKMPFKLSSLEEVLELDKEVRERFKNVAGV.

Threonine 7, glycine 8, serine 9, isoleucine 10, glycine 31, lysine 32, asparagine 33, and asparagine 113 together coordinate NADPH. Residue lysine 114 participates in 1-deoxy-D-xylulose 5-phosphate binding. Glutamate 115 is a binding site for NADPH. Aspartate 133 is a Mn(2+) binding site. 1-deoxy-D-xylulose 5-phosphate-binding residues include serine 134, glutamate 135, serine 158, and histidine 181. Glutamate 135 is a binding site for Mn(2+). Glycine 187 provides a ligand contact to NADPH. Residues serine 194, asparagine 199, lysine 200, and glutamate 203 each contribute to the 1-deoxy-D-xylulose 5-phosphate site. Residue glutamate 203 participates in Mn(2+) binding.

The protein belongs to the DXR family. Mg(2+) is required as a cofactor. It depends on Mn(2+) as a cofactor.

The enzyme catalyses 2-C-methyl-D-erythritol 4-phosphate + NADP(+) = 1-deoxy-D-xylulose 5-phosphate + NADPH + H(+). It participates in isoprenoid biosynthesis; isopentenyl diphosphate biosynthesis via DXP pathway; isopentenyl diphosphate from 1-deoxy-D-xylulose 5-phosphate: step 1/6. In terms of biological role, catalyzes the NADPH-dependent rearrangement and reduction of 1-deoxy-D-xylulose-5-phosphate (DXP) to 2-C-methyl-D-erythritol 4-phosphate (MEP). The chain is 1-deoxy-D-xylulose 5-phosphate reductoisomerase from Helicobacter pylori (strain ATCC 700392 / 26695) (Campylobacter pylori).